Consider the following 214-residue polypeptide: Probable transaldolase (214 aa).

K83 serves as the catalytic Schiff-base intermediate with substrate.

Belongs to the transaldolase family. Type 3B subfamily.

Its subcellular location is the cytoplasm. It catalyses the reaction D-sedoheptulose 7-phosphate + D-glyceraldehyde 3-phosphate = D-erythrose 4-phosphate + beta-D-fructose 6-phosphate. It participates in carbohydrate degradation; pentose phosphate pathway; D-glyceraldehyde 3-phosphate and beta-D-fructose 6-phosphate from D-ribose 5-phosphate and D-xylulose 5-phosphate (non-oxidative stage): step 2/3. Its function is as follows. Transaldolase is important for the balance of metabolites in the pentose-phosphate pathway. In Leptospira interrogans serogroup Icterohaemorrhagiae serovar copenhageni (strain Fiocruz L1-130), this protein is Probable transaldolase.